A 320-amino-acid polypeptide reads, in one-letter code: Chitinase 3 (320 aa).

An N-terminal signal peptide occupies residues 1-18 (MRALALAVVAMAVVAVRG). In terms of domain architecture, Chitin-binding type-1 spans 19–59 (EQCGSQAGGALCPNCLCCSQYGWCGSTSDYCGAGCQSQCSG). 8 cysteine pairs are disulfide-bonded: Cys21–Cys36, Cys30–Cys42, Cys33–Cys61, Cys35–Cys49, Cys53–Cys57, Cys97–Cys159, Cys172–Cys180, and Cys279–Cys311. Glu141 acts as the Proton donor in catalysis.

This sequence belongs to the glycosyl hydrolase 19 family. Chitinase class I subfamily. Expressed at low levels in roots, leaves, sheaths and meristems.

The enzyme catalyses Random endo-hydrolysis of N-acetyl-beta-D-glucosaminide (1-&gt;4)-beta-linkages in chitin and chitodextrins.. Its function is as follows. Hydrolyzes chitin and plays a role in defense against fungal pathogens containing chitin. Inhibits the growth of T.reesei fungus on plate assay. This is Chitinase 3 (Cht3) from Oryza sativa subsp. japonica (Rice).